A 92-amino-acid chain; its full sequence is C-C motif chemokine 4-like (92 aa).

Residues 1–23 (MKLCVTVLSLLVLVAAFCSLALS) form the signal peptide. Cystine bridges form between Cys-34–Cys-58 and Cys-35–Cys-74.

The protein belongs to the intercrine beta (chemokine CC) family. As to quaternary structure, interacts with CCR5. In terms of tissue distribution, detected in B-cells.

Its subcellular location is the secreted. Functionally, chemokine that induces chemotaxis of cells expressing CCR5 or CCR1. Inhibits HIV replication in peripheral blood monocytes that express CCR5. This chain is C-C motif chemokine 4-like (CCL4L1), found in Homo sapiens (Human).